A 704-amino-acid polypeptide reads, in one-letter code: ATP-dependent zinc metalloprotease FTSH 5, chloroplastic (704 aa).

A chloroplast-targeting transit peptide spans 1–58 (MATTSSNPLLLSSNFLGSQIIISAPTPKTTTKSLPFSVISRKRYQISQSEKLMKSLPS). The transit peptide at 59 to 76 (QAALAALLFSSSSPQALA) directs the protein to the thylakoid. A helical transmembrane segment spans residues 193-213 (FDFIGNLLFPLLAFGGLFYLF). 290-297 (GPPGTGKT) is a binding site for ATP. Position 512 (H512) interacts with Zn(2+). E513 is a catalytic residue. Residues H516 and D593 each contribute to the Zn(2+) site.

The protein in the N-terminal section; belongs to the AAA ATPase family. It in the C-terminal section; belongs to the peptidase M41 family. Heterohexamers with FTSH1, FTSH2 and FTSH8. Requires Zn(2+) as cofactor. In terms of tissue distribution, ubiquitous.

The protein resides in the plastid. Its subcellular location is the chloroplast thylakoid membrane. Its function is as follows. Part of a complex that function as an ATP-dependent zinc metallopeptidase. Involved in the thylakoid formation and in the removal of damaged D1 in the photosystem II, preventing cell death under high-intensity light conditions. Not involved in the degradation of the light-harvesting complex of photosystem II (LHC II) or in thermotolerance. The protein is ATP-dependent zinc metalloprotease FTSH 5, chloroplastic (FTSH5) of Arabidopsis thaliana (Mouse-ear cress).